The chain runs to 182 residues: Ribosome maturation factor RimM (182 aa).

The 80-residue stretch at 103–182 (DGSYYWKDLM…TIEVDWDPGF (80 aa)) folds into the PRC barrel domain.

The protein belongs to the RimM family. In terms of assembly, binds ribosomal protein uS19.

The protein localises to the cytoplasm. Functionally, an accessory protein needed during the final step in the assembly of 30S ribosomal subunit, possibly for assembly of the head region. Essential for efficient processing of 16S rRNA. May be needed both before and after RbfA during the maturation of 16S rRNA. It has affinity for free ribosomal 30S subunits but not for 70S ribosomes. The polypeptide is Ribosome maturation factor RimM (Citrobacter koseri (strain ATCC BAA-895 / CDC 4225-83 / SGSC4696)).